The following is a 471-amino-acid chain: Pachytene checkpoint protein 2 homolog (471 aa).

213–220 (GPPGTGKT) is a binding site for ATP.

The protein belongs to the AAA ATPase family. PCH2 subfamily.

In terms of biological role, plays a key role in chromosome recombination during meiosis. The polypeptide is Pachytene checkpoint protein 2 homolog (Oryza sativa subsp. indica (Rice)).